Consider the following 84-residue polypeptide: Large ribosomal subunit protein bL27 (84 aa).

The tract at residues 1–20 (MAHKKAGGSTRNGRDSNPKY) is disordered.

It belongs to the bacterial ribosomal protein bL27 family.

This chain is Large ribosomal subunit protein bL27, found in Francisella tularensis subsp. tularensis (strain FSC 198).